Reading from the N-terminus, the 212-residue chain is Octanoyltransferase (212 aa).

In terms of domain architecture, BPL/LPL catalytic spans 31–209 (AETQDEIWLV…HFANLLGYNI (179 aa)). Residues 70 to 77 (RGGQITYH), 138 to 140 (SLG), and 151 to 153 (GLA) each bind substrate. Cysteine 169 functions as the Acyl-thioester intermediate in the catalytic mechanism.

Belongs to the LipB family.

Its subcellular location is the cytoplasm. It catalyses the reaction octanoyl-[ACP] + L-lysyl-[protein] = N(6)-octanoyl-L-lysyl-[protein] + holo-[ACP] + H(+). It functions in the pathway protein modification; protein lipoylation via endogenous pathway; protein N(6)-(lipoyl)lysine from octanoyl-[acyl-carrier-protein]: step 1/2. Catalyzes the transfer of endogenously produced octanoic acid from octanoyl-acyl-carrier-protein onto the lipoyl domains of lipoate-dependent enzymes. Lipoyl-ACP can also act as a substrate although octanoyl-ACP is likely to be the physiological substrate. This Haemophilus influenzae (strain ATCC 51907 / DSM 11121 / KW20 / Rd) protein is Octanoyltransferase.